The chain runs to 349 residues: Ion-translocating oxidoreductase complex subunit D (349 aa).

Transmembrane regions (helical) follow at residues 20–42, 77–99, and 124–144; these read VMQR…FGWG, SAML…WMIV, and AMAA…TWIA. T185 carries the FMN phosphoryl threonine modification. 5 consecutive transmembrane segments (helical) span residues 212–232, 239–259, 265–285, 291–311, and 315–335; these read STGV…LVLL, WHIS…GFLL, ASPL…FIAT, ATSP…VYII, and GGYP…APFI.

The protein belongs to the NqrB/RnfD family. As to quaternary structure, the complex is composed of six subunits: RnfA, RnfB, RnfC, RnfD, RnfE and RnfG. The cofactor is FMN.

Its subcellular location is the cell inner membrane. Functionally, part of a membrane-bound complex that couples electron transfer with translocation of ions across the membrane. In Shewanella baltica (strain OS195), this protein is Ion-translocating oxidoreductase complex subunit D.